The chain runs to 244 residues: 1-(5-phosphoribosyl)-5-[(5-phosphoribosylamino)methylideneamino] imidazole-4-carboxamide isomerase (244 aa).

Aspartate 8 serves as the catalytic Proton acceptor. The active-site Proton donor is the aspartate 129.

The protein belongs to the HisA/HisF family.

It localises to the cytoplasm. The enzyme catalyses 1-(5-phospho-beta-D-ribosyl)-5-[(5-phospho-beta-D-ribosylamino)methylideneamino]imidazole-4-carboxamide = 5-[(5-phospho-1-deoxy-D-ribulos-1-ylimino)methylamino]-1-(5-phospho-beta-D-ribosyl)imidazole-4-carboxamide. The protein operates within amino-acid biosynthesis; L-histidine biosynthesis; L-histidine from 5-phospho-alpha-D-ribose 1-diphosphate: step 4/9. The protein is 1-(5-phosphoribosyl)-5-[(5-phosphoribosylamino)methylideneamino] imidazole-4-carboxamide isomerase of Maricaulis maris (strain MCS10) (Caulobacter maris).